The sequence spans 485 residues: Peroxisomal catalase (485 aa).

Catalysis depends on residues His53 and Asn126. Tyr336 is a heme binding site.

It belongs to the catalase family. As to quaternary structure, homotetramer. Requires heme as cofactor.

The protein resides in the peroxisome matrix. It carries out the reaction 2 H2O2 = O2 + 2 H2O. In terms of biological role, catalyzes the degradation of hydrogen peroxide (H(2)O(2)) generated by peroxisomal oxidases to water and oxygen, thereby protecting cells from the toxic effects of hydrogen peroxide. The protein is Peroxisomal catalase (POX9) of Candida tropicalis (Yeast).